The sequence spans 388 residues: Methylthioribose-1-phosphate isomerase (388 aa).

The active-site Proton donor is the Asp-253.

This sequence belongs to the eIF-2B alpha/beta/delta subunits family. MtnA subfamily.

Its subcellular location is the cytoplasm. It is found in the nucleus. It catalyses the reaction 5-(methylsulfanyl)-alpha-D-ribose 1-phosphate = 5-(methylsulfanyl)-D-ribulose 1-phosphate. The protein operates within amino-acid biosynthesis; L-methionine biosynthesis via salvage pathway; L-methionine from S-methyl-5-thio-alpha-D-ribose 1-phosphate: step 1/6. Its function is as follows. Catalyzes the interconversion of methylthioribose-1-phosphate (MTR-1-P) into methylthioribulose-1-phosphate (MTRu-1-P). This chain is Methylthioribose-1-phosphate isomerase, found in Fusarium vanettenii (strain ATCC MYA-4622 / CBS 123669 / FGSC 9596 / NRRL 45880 / 77-13-4) (Fusarium solani subsp. pisi).